We begin with the raw amino-acid sequence, 693 residues long: Heat shock protein homolog SSE1 (693 aa).

S2 is modified (N-acetylserine). A Glycyl lysine isopeptide (Lys-Gly) (interchain with G-Cter in ubiquitin) cross-link involves residue K195. T242 carries the post-translational modification Phosphothreonine. The interval 653-693 is disordered; the sequence is IRSKQEASQMAAMAEKLAAQRKAEAEKKEEKKDTEGDVDMD. S660 is subject to Phosphoserine. The span at 673 to 687 shows a compositional bias: basic and acidic residues; it reads RKAEAEKKEEKKDTE.

This sequence belongs to the heat shock protein 70 family.

Its subcellular location is the cytoplasm. Functionally, has a calcium-dependent calmodulin-binding activity. Required for normal growth at various temperatures. The chain is Heat shock protein homolog SSE1 (SSE1) from Saccharomyces cerevisiae (strain ATCC 204508 / S288c) (Baker's yeast).